The chain runs to 615 residues: Extracellular metalloproteinase 1 (615 aa).

The signal sequence occupies residues 1–8; sequence SLPLHVLA. A propeptide spanning residues 9-235 is cleaved from the precursor; that stretch reads HPQPSTSTSL…VHNVVDYVAH (227 aa). A glycan (N-linked (GlcNAc...) asparagine) is linked at Asn-276. Position 419 (His-419) interacts with Zn(2+). The active site involves Glu-420. His-423 provides a ligand contact to Zn(2+). Residues Asn-464, Asn-583, and Asn-612 are each glycosylated (N-linked (GlcNAc...) asparagine).

This sequence belongs to the peptidase M36 family. Requires Zn(2+) as cofactor.

It is found in the secreted. Functionally, secreted metalloproteinase probably acting as a virulence factor. The chain is Extracellular metalloproteinase 1 (MEP1) from Trichophyton equinum (Horse ringworm fungus).